A 489-amino-acid chain; its full sequence is Trehalose-6-phosphate synthase (489 aa).

Arg22 contacts D-glucose 6-phosphate. Gly42–Gly43 contacts UDP-alpha-D-glucose. D-glucose 6-phosphate is bound by residues Tyr94 and Asp148. Residues Arg290 and Lys295 each coordinate UDP-alpha-D-glucose. A D-glucose 6-phosphate-binding site is contributed by Arg328. Leu393 to Glu397 is a binding site for UDP-alpha-D-glucose.

Belongs to the glycosyltransferase 20 family. In terms of assembly, homotetramer.

It carries out the reaction ADP-alpha-D-glucose + D-glucose 6-phosphate = alpha,alpha-trehalose 6-phosphate + ADP + H(+). The catalysed reaction is CDP-alpha-D-glucose + D-glucose 6-phosphate = alpha,alpha-trehalose 6-phosphate + CDP + H(+). The enzyme catalyses GDP-alpha-D-glucose + D-glucose 6-phosphate = alpha,alpha-trehalose 6-phosphate + GDP + H(+). It catalyses the reaction TDP-alpha-D-glucose + D-glucose 6-phosphate = 5-methyl-UDP + alpha,alpha-trehalose 6-phosphate + H(+). It carries out the reaction D-glucose 6-phosphate + UDP-alpha-D-glucose = alpha,alpha-trehalose 6-phosphate + UDP + H(+). Its pathway is glycan biosynthesis; trehalose biosynthesis. In terms of biological role, probably involved in the osmoprotection via the biosynthesis of trehalose and in the production of glycogen and alpha-glucan via the TreS-Pep2 branch involved in the biosynthesis of maltose-1-phosphate (M1P). Catalyzes the transfer of glucose from UDP-glucose (UDP-Glc) to D-glucose 6-phosphate (Glc-6-P) to form trehalose-6-phosphate. Probably also able to use ADP-Glc, CDP-Glc, GDP-Glc and TDP-Glc as glucosyl donors. This chain is Trehalose-6-phosphate synthase, found in Mycobacterium sp. (strain KMS).